The chain runs to 549 residues: Glucose-6-phosphate isomerase (549 aa).

The Proton donor role is filled by Glu-353. Catalysis depends on residues His-384 and Lys-512.

Belongs to the GPI family.

The protein localises to the cytoplasm. The enzyme catalyses alpha-D-glucose 6-phosphate = beta-D-fructose 6-phosphate. It functions in the pathway carbohydrate biosynthesis; gluconeogenesis. Its pathway is carbohydrate degradation; glycolysis; D-glyceraldehyde 3-phosphate and glycerone phosphate from D-glucose: step 2/4. In terms of biological role, catalyzes the reversible isomerization of glucose-6-phosphate to fructose-6-phosphate. This chain is Glucose-6-phosphate isomerase, found in Solidesulfovibrio magneticus (strain ATCC 700980 / DSM 13731 / RS-1) (Desulfovibrio magneticus).